Here is a 1204-residue protein sequence, read N- to C-terminus: ATP-dependent helicase/nuclease subunit A (1204 aa).

One can recognise a UvrD-like helicase ATP-binding domain in the interval 2-469; the sequence is TNFTKEQDQA…IILADNFRST (468 aa). 23-30 lines the ATP pocket; sequence ASAGSGKT. The 288-residue stretch at 497–784 folds into the UvrD-like helicase C-terminal domain; it reads GQLQFGASYY…KLMTIHASKG (288 aa).

Belongs to the helicase family. AddA subfamily. As to quaternary structure, heterodimer of AddA and AddB/RexB. Mg(2+) serves as cofactor.

The catalysed reaction is Couples ATP hydrolysis with the unwinding of duplex DNA by translocating in the 3'-5' direction.. It catalyses the reaction ATP + H2O = ADP + phosphate + H(+). Functionally, the heterodimer acts as both an ATP-dependent DNA helicase and an ATP-dependent, dual-direction single-stranded exonuclease. Recognizes the chi site generating a DNA molecule suitable for the initiation of homologous recombination. The AddA nuclease domain is required for chi fragment generation; this subunit has the helicase and 3' -&gt; 5' nuclease activities. In Lactobacillus gasseri (strain ATCC 33323 / DSM 20243 / BCRC 14619 / CIP 102991 / JCM 1131 / KCTC 3163 / NCIMB 11718 / NCTC 13722 / AM63), this protein is ATP-dependent helicase/nuclease subunit A.